The chain runs to 1299 residues: Cilia- and flagella-associated protein 251 (1299 aa).

Positions 1–351 (MSDTEENPLE…SQKPEDILAQ (351 aa)) are disordered. Composition is skewed to acidic residues over residues 17 to 45 (EMEEEKEEKKEEEEEEEEGEKEKEEEEEE), 91 to 162 (EKEE…EEDA), and 176 to 189 (ESQEDGEGLEEWVE). A compositionally biased stretch (basic and acidic residues) spans 190–199 (KEEQREGEEV). Acidic residues predominate over residues 212-228 (EEEGWEEEKSGEEEKSE). Residues 229–257 (ESERSKERGGEEEGQEKEEAEHEGEREEG) are compositionally biased toward basic and acidic residues. Acidic residues predominate over residues 269-280 (REEEEEEEDTET). 2 stretches are compositionally biased toward basic and acidic residues: residues 281–297 (TETKAGRAKEEKKEKQN) and 331–351 (NSMKVDDTEEASQKPEDILAQ). WD repeat units follow at residues 484 to 526 (PVHT…IWKW), 534 to 574 (ACTL…CWFE), 585 to 624 (VLTEKTFNKLVGKFSQSVFHLKLPQVLSATKEGKLVVWDI), 643 to 678 (PRKLVHLQKEAITVLMTIDSYIVTGDIKGNIKFYDH), 681 to 741 (SVVN…VYHM), 745 to 785 (GTKL…VWDF), 791 to 828 (LFSRTFEKGLGVQCLTYNPEGALLGAGFTEGTVYILDA), 838 to 874 (PFKYSKSSVSHCCFSHDSNYMATADVNFTVAVYMVVV), 881 to 924 (WEYL…EYNL), 935 to 975 (LDVH…LFNA), 981 to 1027 (RKTL…ILPV), 1033 to 1071 (KTCAIVCHPNGVAGMALSYDGRFAFTAGGQDRSVVQWKI), 1109 to 1149 (YFYY…FYPS), and 1169 to 1209 (GKLI…GYTN).

Its subcellular location is the cytoplasm. It localises to the cytoskeleton. The protein localises to the cilium axoneme. It is found in the cell projection. The protein resides in the cilium. Its subcellular location is the flagellum. In terms of biological role, involved in spermatozoa motility. May also regulate cilium motility through its role in the assembly of the axonemal radial spokes. This chain is Cilia- and flagella-associated protein 251, found in Mus musculus (Mouse).